Here is a 127-residue protein sequence, read N- to C-terminus: Large ribosomal subunit protein bL20 (127 aa).

The protein belongs to the bacterial ribosomal protein bL20 family.

Binds directly to 23S ribosomal RNA and is necessary for the in vitro assembly process of the 50S ribosomal subunit. It is not involved in the protein synthesizing functions of that subunit. The sequence is that of Large ribosomal subunit protein bL20 from Bifidobacterium adolescentis (strain ATCC 15703 / DSM 20083 / NCTC 11814 / E194a).